Reading from the N-terminus, the 291-residue chain is 4-hydroxy-tetrahydrodipicolinate synthase (291 aa).

Threonine 44 is a pyruvate binding site. Residue tyrosine 132 is the Proton donor/acceptor of the active site. The Schiff-base intermediate with substrate role is filled by lysine 160. Residue valine 202 coordinates pyruvate.

It belongs to the DapA family. As to quaternary structure, homotetramer; dimer of dimers.

Its subcellular location is the cytoplasm. The enzyme catalyses L-aspartate 4-semialdehyde + pyruvate = (2S,4S)-4-hydroxy-2,3,4,5-tetrahydrodipicolinate + H2O + H(+). It functions in the pathway amino-acid biosynthesis; L-lysine biosynthesis via DAP pathway; (S)-tetrahydrodipicolinate from L-aspartate: step 3/4. Catalyzes the condensation of (S)-aspartate-beta-semialdehyde [(S)-ASA] and pyruvate to 4-hydroxy-tetrahydrodipicolinate (HTPA). The chain is 4-hydroxy-tetrahydrodipicolinate synthase from Clostridium perfringens (strain SM101 / Type A).